Reading from the N-terminus, the 213-residue chain is Thymidine kinase (213 aa).

ATP is bound by residues 20-27 (GPMFSGKT) and 93-96 (DEAQ). Glutamate 94 acts as the Proton acceptor in catalysis. Zn(2+) is bound by residues cysteine 150, cysteine 153, cysteine 185, and histidine 188.

This sequence belongs to the thymidine kinase family. Homotetramer.

Its subcellular location is the cytoplasm. It carries out the reaction thymidine + ATP = dTMP + ADP + H(+). This chain is Thymidine kinase, found in Mycoplasma genitalium (strain ATCC 33530 / DSM 19775 / NCTC 10195 / G37) (Mycoplasmoides genitalium).